The chain runs to 653 residues: UvrABC system protein C (653 aa).

In terms of domain architecture, GIY-YIG spans 44–122 (NAPGVYRMVN…IKRLRPRFNV (79 aa)). Residues 232 to 267 (STVKAEIATAMQEASQALDFERAAIYRDRLAALSHV) form the UVR domain.

This sequence belongs to the UvrC family. Interacts with UvrB in an incision complex.

Its subcellular location is the cytoplasm. In terms of biological role, the UvrABC repair system catalyzes the recognition and processing of DNA lesions. UvrC both incises the 5' and 3' sides of the lesion. The N-terminal half is responsible for the 3' incision and the C-terminal half is responsible for the 5' incision. The chain is UvrABC system protein C from Chelativorans sp. (strain BNC1).